The sequence spans 192 residues: Epididymal-specific lipocalin-5 (192 aa).

Residues 1-26 (MCSVARHMESIMLFTLLGLCVGLAAG) form the signal peptide. Cysteine 89 and cysteine 183 are disulfide-bonded.

This sequence belongs to the calycin superfamily. Lipocalin family. Post-translationally, 2 different forms with differently processed N-termini exist. In terms of tissue distribution, epididymal fluid of the caudal and corpus regions (at protein level).

The protein localises to the secreted. Associates with spermatozoa in the epididymal fluid but does not bind tightly to them. Binds both all-trans and 13-cis retinoic acid. May act as a retinoid carrier protein which is required for epididymal function and/or sperm maturation. The polypeptide is Epididymal-specific lipocalin-5 (Mus musculus (Mouse)).